The sequence spans 211 residues: Small ribosomal subunit protein uS3 (211 aa).

Residues 16–85 (IDEYFKTKLV…NPQIEVKQVE (70 aa)) form the KH type-2 domain.

Belongs to the universal ribosomal protein uS3 family. Part of the 30S ribosomal subunit.

In terms of biological role, binds the lower part of the 30S subunit head. The chain is Small ribosomal subunit protein uS3 from Methanococcus maripaludis (strain DSM 14266 / JCM 13030 / NBRC 101832 / S2 / LL).